The primary structure comprises 154 residues: Pro-corazonin (154 aa).

Residues 1 to 19 form the signal peptide; the sequence is MLRLLLLPLFLFTLSMCMG. At Gln20 the chain carries Pyrrolidone carboxylic acid. Residue Asn30 is modified to Asparagine amide. Positions 70–154 are excised as a propeptide; the sequence is LERCLSQLQR…SAEPNVFGKH (85 aa). The interval 91 to 119 is disordered; the sequence is DFNANRVDPDPENSAHPRLSNSNGENVLY. Polar residues predominate over residues 109-119; that stretch reads LSNSNGENVLY.

This sequence belongs to the corazonin family. In terms of tissue distribution, from late embryo to larva, expression is consistently detected in three neuronal groups: dorso-lateral neurons (DL), dorso-medial neurons (DM), and neurons in the ventral nerve cord (vCrz). Both the vCrz and DM groups die via programmed cell death during metamorphosis, whereas the DL neurons persist to adulthood. In adults, expression is seen in a cluster of six to eight neurons per lobe in the pars lateralis (DLP), in numerous neuronal cells in the optic lobes, and in a novel group of four abdominal ganglionic neurons present only in males (ms-aCrz). Projections of the ms-aCrz neurons terminate within the ventral nerve cord, implying a role as interneurons. Terminals of the DLP neurons are found in the retrocerebral complex that produces juvenile hormone and adipokinetic hormone, located in the vicinity of terminals emanating from PDF-containing pacemaking neurons.

Its subcellular location is the secreted. Cardioactive peptide. Corazonin is probably involved in the physiological regulation of the heart beat. Clock (Clk) and cycle (cyc) proteins negatively regulate Crz transcription in a cell-specific manner. The sequence is that of Pro-corazonin (Crz) from Drosophila melanogaster (Fruit fly).